We begin with the raw amino-acid sequence, 439 residues long: Xylose isomerase (439 aa).

Residues H101 and D104 contribute to the active site. 7 residues coordinate Mg(2+): E232, E268, H271, D296, D307, D309, and D339.

It belongs to the xylose isomerase family. In terms of assembly, homotetramer. Requires Mg(2+) as cofactor.

Its subcellular location is the cytoplasm. The catalysed reaction is alpha-D-xylose = alpha-D-xylulofuranose. The polypeptide is Xylose isomerase (Serratia proteamaculans (strain 568)).